A 573-amino-acid polypeptide reads, in one-letter code: Peptidyl-prolyl cis-trans isomerase-like 2 (573 aa).

Residues 37–119 (QRLPFDCCAL…GNLHDPITYK (83 aa)) enclose the U-box domain. The tract at residues 223–247 (KNKSGQSPAPTPSKIDDGKGQEKKE) is disordered. Over residues 236-247 (KIDDGKGQEKKE) the composition is skewed to basic and acidic residues. In terms of domain architecture, PPIase cyclophilin-type spans 312-469 (SKAYATITTN…RDIVIQGVTV (158 aa)). Residues 489-510 (DQSDAALKRRAEAQKEREKDRT) are compositionally biased toward basic and acidic residues. A disordered region spans residues 489-515 (DQSDAALKRRAEAQKEREKDRTTWLGT).

This sequence belongs to the cyclophilin-type PPIase family. PPIL2 subfamily.

The protein resides in the nucleus. The enzyme catalyses [protein]-peptidylproline (omega=180) = [protein]-peptidylproline (omega=0). The catalysed reaction is S-ubiquitinyl-[E2 ubiquitin-conjugating enzyme]-L-cysteine + [acceptor protein]-L-lysine = [E2 ubiquitin-conjugating enzyme]-L-cysteine + N(6)-ubiquitinyl-[acceptor protein]-L-lysine.. It participates in protein modification; protein ubiquitination. Its function is as follows. May catalyze the cis-trans isomerization of proline imidic peptide bonds in oligopeptides thereby assisting the folding of proteins. May also function as a chaperone, playing a role in intracellular transport of proteins. May also have a protein ubiquitin ligase activity acting as an E3 ubiquitin protein ligase or as a ubiquitin-ubiquitin ligase promoting elongation of ubiquitin chains on proteins. This Cryptococcus neoformans var. neoformans serotype D (strain B-3501A) (Filobasidiella neoformans) protein is Peptidyl-prolyl cis-trans isomerase-like 2 (CYP8).